The primary structure comprises 353 residues: D-alanine--D-alanine ligase (353 aa).

The ATP-grasp domain maps to 141–349 (KAAFAAAGLP…LEELVSQLVI (209 aa)). 176 to 231 (EAKLKYPCFVKPANLGSSVGISKAQNRNELLIGLDKAASLDRRIVVEQGVSARELE) contacts ATP. Mg(2+)-binding residues include aspartate 302, glutamate 316, and asparagine 318.

The protein belongs to the D-alanine--D-alanine ligase family. It depends on Mg(2+) as a cofactor. Mn(2+) is required as a cofactor.

The protein localises to the cytoplasm. The catalysed reaction is 2 D-alanine + ATP = D-alanyl-D-alanine + ADP + phosphate + H(+). Its pathway is cell wall biogenesis; peptidoglycan biosynthesis. Cell wall formation. This chain is D-alanine--D-alanine ligase, found in Prochlorococcus marinus (strain MIT 9303).